Here is a 376-residue protein sequence, read N- to C-terminus: N-acetyldiaminopimelate deacetylase (376 aa).

The active site involves Asp-69. Residue Glu-127 is the Proton acceptor of the active site.

It belongs to the peptidase M20A family. N-acetyldiaminopimelate deacetylase subfamily.

It carries out the reaction N-acetyl-(2S,6S)-2,6-diaminopimelate + H2O = (2S,6S)-2,6-diaminopimelate + acetate. Its pathway is amino-acid biosynthesis; L-lysine biosynthesis via DAP pathway; LL-2,6-diaminopimelate from (S)-tetrahydrodipicolinate (acetylase route): step 3/3. In terms of biological role, catalyzes the conversion of N-acetyl-diaminopimelate to diaminopimelate and acetate. This Lactococcus lactis subsp. cremoris (strain SK11) protein is N-acetyldiaminopimelate deacetylase.